The sequence spans 136 residues: DNA-directed RNA polymerase subunit omega (136 aa).

The protein belongs to the RNA polymerase subunit omega family. In terms of assembly, the RNAP catalytic core consists of 2 alpha, 1 beta, 1 beta' and 1 omega subunit. When a sigma factor is associated with the core the holoenzyme is formed, which can initiate transcription.

It catalyses the reaction RNA(n) + a ribonucleoside 5'-triphosphate = RNA(n+1) + diphosphate. Functionally, promotes RNA polymerase assembly. Latches the N- and C-terminal regions of the beta' subunit thereby facilitating its interaction with the beta and alpha subunits. The protein is DNA-directed RNA polymerase subunit omega of Methylorubrum extorquens (strain CM4 / NCIMB 13688) (Methylobacterium extorquens).